We begin with the raw amino-acid sequence, 358 residues long: WD repeat-containing protein 53 (358 aa).

WD repeat units follow at residues 8–47 (GHSS…GHMQ), 92–131 (VNEE…VTRS), 134–174 (RHSN…PVWI), 195–234 (LNPA…CERE), and 239–278 (GHTL…EKLQ). Residues 288–309 (KKAKRAACPTQGGNSRAPGAED) are disordered.

The protein belongs to the WD repeat WDR53 family.

The chain is WD repeat-containing protein 53 (Wdr53) from Mus musculus (Mouse).